The chain runs to 224 residues: Flagellar L-ring protein (224 aa).

Positions 1–15 (MLRYLMVGSLLVLAG) are cleaved as a signal peptide. A lipid anchor (N-palmitoyl cysteine) is attached at C16. C16 is lipidated: S-diacylglycerol cysteine.

It belongs to the FlgH family. In terms of assembly, the basal body constitutes a major portion of the flagellar organelle and consists of four rings (L,P,S, and M) mounted on a central rod.

It is found in the cell outer membrane. It localises to the bacterial flagellum basal body. Functionally, assembles around the rod to form the L-ring and probably protects the motor/basal body from shearing forces during rotation. The polypeptide is Flagellar L-ring protein (Shewanella amazonensis (strain ATCC BAA-1098 / SB2B)).